The chain runs to 139 residues: Putative lipoprotein MIP_01412 (139 aa).

Residues 1–19 (MRNRTVAAGAVLTAALLGA) form the signal peptide. Cysteine 20 carries the N-palmitoyl cysteine lipid modification. Residue cysteine 20 is the site of S-diacylglycerol cysteine attachment.

It belongs to the mycobacterial 19 kDa antigen family.

The protein localises to the cell membrane. The protein is Putative lipoprotein MIP_01412 of Mycobacterium indicus pranii (strain DSM 45239 / MTCC 9506).